Here is a 240-residue protein sequence, read N- to C-terminus: Methylthioribulose-1-phosphate dehydratase (240 aa).

Position 99 (cysteine 99) interacts with substrate. Zn(2+)-binding residues include histidine 116 and histidine 118. Catalysis depends on glutamate 145, which acts as the Proton donor/acceptor. Residue histidine 201 coordinates Zn(2+).

This sequence belongs to the aldolase class II family. MtnB subfamily. Zn(2+) serves as cofactor.

Its subcellular location is the cytoplasm. The catalysed reaction is 5-(methylsulfanyl)-D-ribulose 1-phosphate = 5-methylsulfanyl-2,3-dioxopentyl phosphate + H2O. The protein operates within amino-acid biosynthesis; L-methionine biosynthesis via salvage pathway; L-methionine from S-methyl-5-thio-alpha-D-ribose 1-phosphate: step 2/6. Catalyzes the dehydration of methylthioribulose-1-phosphate (MTRu-1-P) into 2,3-diketo-5-methylthiopentyl-1-phosphate (DK-MTP-1-P). This chain is Methylthioribulose-1-phosphate dehydratase, found in Ajellomyces capsulatus (strain H143) (Darling's disease fungus).